The sequence spans 350 residues: Small ribosomal subunit biogenesis GTPase RsgA (350 aa).

A compositionally biased stretch (polar residues) spans 1–17; the sequence is MSKNKLSKGQQRRVNAN. The disordered stretch occupies residues 1-27; the sequence is MSKNKLSKGQQRRVNANHQRRLKTSAE. The CP-type G domain maps to 104-273; it reads TSVLTRPDFY…VIDSPGVREF (170 aa). GTP contacts are provided by residues 160 to 163 and 214 to 222; these read NKID and GQSGVGKSS. Zn(2+) is bound by residues Cys-297, Cys-302, His-304, and Cys-310.

The protein belongs to the TRAFAC class YlqF/YawG GTPase family. RsgA subfamily. In terms of assembly, monomer. Associates with 30S ribosomal subunit, binds 16S rRNA. Requires Zn(2+) as cofactor.

Its subcellular location is the cytoplasm. In terms of biological role, one of several proteins that assist in the late maturation steps of the functional core of the 30S ribosomal subunit. Helps release RbfA from mature subunits. May play a role in the assembly of ribosomal proteins into the subunit. Circularly permuted GTPase that catalyzes slow GTP hydrolysis, GTPase activity is stimulated by the 30S ribosomal subunit. The protein is Small ribosomal subunit biogenesis GTPase RsgA of Salmonella dublin (strain CT_02021853).